A 213-amino-acid chain; its full sequence is Protein arginine N-methyltransferase SFM1 (213 aa).

S204 and S207 each carry phosphoserine.

The protein belongs to the class IV-like SAM-binding methyltransferase superfamily. Protein arginine N-methyltransferase SFM1 family.

Its subcellular location is the cytoplasm. Its function is as follows. S-adenosyl-L-methionine-dependent protein-arginine N-methyltransferase that monomethylates ribosomal protein S3 (RPS3) at 'Arg-146'. The chain is Protein arginine N-methyltransferase SFM1 from Saccharomyces cerevisiae (strain ATCC 204508 / S288c) (Baker's yeast).